The chain runs to 244 residues: Ureidoacrylate amidohydrolase RutB (244 aa).

The active-site Proton acceptor is the Asp-38. Residue Lys-147 is part of the active site. The Nucleophile role is filled by Cys-180.

It belongs to the isochorismatase family. RutB subfamily.

It catalyses the reaction (Z)-3-ureidoacrylate + H2O + H(+) = (Z)-3-aminoacrylate + NH4(+) + CO2. The enzyme catalyses (Z)-3-ureidoacrylate + H2O = (Z)-3-aminoacrylate + carbamate + H(+). It carries out the reaction (Z)-2-methylureidoacrylate + H2O + H(+) = (Z)-2-methylaminoacrylate + NH4(+) + CO2. Its function is as follows. Hydrolyzes ureidoacrylate to form aminoacrylate and carbamate. The carbamate hydrolyzes spontaneously, thereby releasing one of the nitrogen atoms of the pyrimidine ring as ammonia and one of its carbon atoms as CO2. This chain is Ureidoacrylate amidohydrolase RutB, found in Shigella flexneri serotype X (strain 2002017).